The sequence spans 445 residues: Glutamate--tRNA ligase 1 (445 aa).

The 'HIGH' region signature appears at 9 to 19; sequence PSPTGYLHVGN. Residues 238–242 carry the 'KMSKS' region motif; the sequence is KISKR. K241 is a binding site for ATP.

The protein belongs to the class-I aminoacyl-tRNA synthetase family. Glutamate--tRNA ligase type 1 subfamily. In terms of assembly, monomer.

It localises to the cytoplasm. The catalysed reaction is tRNA(Glu) + L-glutamate + ATP = L-glutamyl-tRNA(Glu) + AMP + diphosphate. Functionally, catalyzes the attachment of glutamate to tRNA(Glu) in a two-step reaction: glutamate is first activated by ATP to form Glu-AMP and then transferred to the acceptor end of tRNA(Glu). The chain is Glutamate--tRNA ligase 1 from Ehrlichia ruminantium (strain Gardel).